Here is a 152-residue protein sequence, read N- to C-terminus: Deoxyuridine 5'-triphosphate nucleotidohydrolase (152 aa).

Residues 70–72, N83, 87–89, and K97 each bind substrate; these read RSG and TID.

The protein belongs to the dUTPase family. Mg(2+) is required as a cofactor.

The enzyme catalyses dUTP + H2O = dUMP + diphosphate + H(+). It participates in pyrimidine metabolism; dUMP biosynthesis; dUMP from dCTP (dUTP route): step 2/2. Functionally, this enzyme is involved in nucleotide metabolism: it produces dUMP, the immediate precursor of thymidine nucleotides and it decreases the intracellular concentration of dUTP so that uracil cannot be incorporated into DNA. The chain is Deoxyuridine 5'-triphosphate nucleotidohydrolase from Corynebacterium diphtheriae (strain ATCC 700971 / NCTC 13129 / Biotype gravis).